Consider the following 886-residue polypeptide: Chitin synthase 3 (886 aa).

Disordered regions lie at residues 1 to 70 and 86 to 138; these read MQQG…YQTD and PYEP…AGGG. Basic and acidic residues predominate over residues 7 to 17; sequence LDDRPYGRPEQ. A compositionally biased stretch (polar residues) spans 37 to 56; sequence PSDQLQLNAAQSVDNLSRNS. Asn51 carries N-linked (GlcNAc...) asparagine glycosylation. Residues 106 to 122 show a composition bias toward basic and acidic residues; the sequence is YDHDDLRPMLPHQDSHA. N-linked (GlcNAc...) asparagine glycosylation is present at Asn196. 7 helical membrane passes run 428–448, 526–546, 556–576, 602–622, 637–657, 683–703, and 712–732; these read SAFG…YVAL, RWLN…YQFF, VMLF…WFAV, ILGV…FVLS, MVYF…FIAV, TLIV…FLMF, and FVQY…YAFC. Positions 745–768 are disordered; that stretch reads DQAEKLPSVSTKDGSGKTDLPDES. 2 helical membrane passes run 813-833 and 858-878; these read VLAW…AAGL and VVLW…MWFL.

This sequence belongs to the chitin synthase family. Class I subfamily.

The protein localises to the cell membrane. The enzyme catalyses [(1-&gt;4)-N-acetyl-beta-D-glucosaminyl](n) + UDP-N-acetyl-alpha-D-glucosamine = [(1-&gt;4)-N-acetyl-beta-D-glucosaminyl](n+1) + UDP + H(+). Polymerizes chitin, a structural polymer of the cell wall and septum, by transferring the sugar moiety of UDP-GlcNAc to the non-reducing end of the growing chitin polymer. Involved in tolerance to hyperosmotic conditions. CHS3 is the only V.dahliae chitin synthase that is not involved in virulence. This chain is Chitin synthase 3, found in Verticillium dahliae (strain VdLs.17 / ATCC MYA-4575 / FGSC 10137) (Verticillium wilt).